A 155-amino-acid polypeptide reads, in one-letter code: Small ribosomal subunit protein uS7cz/uS7cy (155 aa).

This sequence belongs to the universal ribosomal protein uS7 family. As to quaternary structure, part of the 30S ribosomal subunit.

It localises to the plastid. It is found in the chloroplast. Its function is as follows. One of the primary rRNA binding proteins, it binds directly to 16S rRNA where it nucleates assembly of the head domain of the 30S subunit. In Anthoceros angustus (Hornwort), this protein is Small ribosomal subunit protein uS7cz/uS7cy (rps7-A).